The primary structure comprises 504 residues: Anaerobic nitric oxide reductase transcription regulator NorR (504 aa).

A 4-aspartylphosphate modification is found at Asp57. The region spanning 187 to 416 (MIGLSPGMTQ…LEHAIHRAVV (230 aa)) is the Sigma-54 factor interaction domain. ATP is bound by residues 215 to 222 (GETGTGKE) and 278 to 287 (ADNGTLFLDE). Positions 479 to 498 (WAACARMLETDVANLHRLAK) form a DNA-binding region, H-T-H motif.

Its pathway is nitrogen metabolism; nitric oxide reduction. Its function is as follows. Required for the expression of anaerobic nitric oxide (NO) reductase, acts as a transcriptional activator for at least the norVW operon. Activation also requires sigma-54. In Escherichia coli O17:K52:H18 (strain UMN026 / ExPEC), this protein is Anaerobic nitric oxide reductase transcription regulator NorR.